A 402-amino-acid polypeptide reads, in one-letter code: MKIAVAGSGYVGLSLGVLLSLQNEVTIVDILPSKVDKINNGLSPIQDEYIEYYLKSKQLSIKATLDSKAAYKEAELVIIATPTNYNSRINYFDTQHVETVIKEVLSVNSHATLIIKSTIPIGFITEMRQKFQTDRIIFSPEFLRESKALYDNLYPSRIIVSCEENDSPKVKADAEKFALLLKSAAKKNNVPVLIMGASEAEAVKLFANTYLALRVAYFNELDTYAESRKLNSHMVIQGISYDDRIGMHYNNPSFGYGGYCLPKDTKQLLANYNNIPQTLIEAIVSSNNVRKSYIAKQIINVLEEQESPVKVVGVYRLIMKSNSDNFRESAIKDVIDILKSKDIKIIIYEPMLNKLESEDQSVLVNDLENFKKQANIIVTNRYDNELQDVKNKVYSRDIFGRD.

NAD(+) is bound by residues 2-19, V11, D29, K34, T83, T118, and E145; that span reads KIAV…GVLL. Residues 141–145, K204, N208, 249–253, and G257 contribute to the substrate site; these read EFLRE and YNNPS. Y259 provides a ligand contact to NAD(+). Residue C260 is the Nucleophile of the active site. K263 lines the NAD(+) pocket. K320 contributes to the substrate binding site. An NAD(+)-binding site is contributed by R327.

The protein belongs to the UDP-glucose/GDP-mannose dehydrogenase family.

It carries out the reaction UDP-alpha-D-glucose + 2 NAD(+) + H2O = UDP-alpha-D-glucuronate + 2 NADH + 3 H(+). Its pathway is nucleotide-sugar biosynthesis; UDP-alpha-D-glucuronate biosynthesis; UDP-alpha-D-glucuronate from UDP-alpha-D-glucose: step 1/1. In terms of biological role, catalyzes the formation of UDP-glucuronic acid which is required for capsular hyaluronic acid synthesis. The protein is UDP-glucose 6-dehydrogenase (hasB) of Streptococcus pyogenes serotype M3 (strain ATCC BAA-595 / MGAS315).